The following is a 123-amino-acid chain: Large ribosomal subunit protein uL29 (123 aa).

Belongs to the universal ribosomal protein uL29 family. Component of the large ribosomal subunit.

It localises to the cytoplasm. Its function is as follows. Component of the large ribosomal subunit. The ribosome is a large ribonucleoprotein complex responsible for the synthesis of proteins in the cell. The polypeptide is Large ribosomal subunit protein uL29 (rpl35) (Platichthys flesus (European flounder)).